The following is a 26-amino-acid chain: Hainantoxin F1-31.97 (26 aa).

Disulfide bonds link Cys-2/Cys-16 and Cys-9/Cys-21.

Belongs to the neurotoxin 10 (Hwtx-1) family. 17 (Hntx-9) subfamily. As to expression, expressed by the venom gland.

The protein resides in the secreted. In terms of biological role, ion channel inhibitor. This Cyriopagopus hainanus (Chinese bird spider) protein is Hainantoxin F1-31.97.